Here is a 278-residue protein sequence, read N- to C-terminus: uncharacterized protein (278 aa).

The segment covering 1–11 (MMIHIHQDKKM) has biased composition (basic and acidic residues). 2 disordered regions span residues 1–107 (MMIH…RYFK) and 206–278 (KVSA…KASR). Over residues 62-94 (KQSGGKNAKSGSKSAKSGSKSAKSGSKTSKTQS) the composition is skewed to low complexity. Basic and acidic residues predominate over residues 97 to 107 (KGDESRDRYFK). The span at 249 to 260 (SAKNAKSTGNKK) shows a compositional bias: polar residues. Over residues 264–278 (KSAGAKKAPAAKASR) the composition is skewed to low complexity.

This is an uncharacterized protein from Acanthamoeba polyphaga mimivirus (APMV).